Consider the following 727-residue polypeptide: Epithelial splicing regulatory protein 2 (727 aa).

The segment at 1-22 is disordered; the sequence is MTPPPPPPPPPGPDPAADPAAD. Serine 83 is modified (phosphoserine). RRM domains lie at 257-353, 358-438, and 475-555; these read TVVR…RFLS, VILR…RSTA, and DCVR…PCST. At serine 573 the chain carries Phosphoserine.

It belongs to the ESRP family. Interacts with RBPMS. As to expression, epithelial cell-specific.

Its subcellular location is the nucleus. Functionally, mRNA splicing factor that regulates the formation of epithelial cell-specific isoforms. Specifically regulates the expression of FGFR2-IIIb, an epithelial cell-specific isoform of FGFR2. Also regulates the splicing of CD44, CTNND1, ENAH, 3 transcripts that undergo changes in splicing during the epithelial-to-mesenchymal transition (EMT). Acts by directly binding specific sequences in mRNAs. Binds the GU-rich sequence motifs in the ISE/ISS-3, a cis-element regulatory region present in the mRNA of FGFR2. The chain is Epithelial splicing regulatory protein 2 (ESRP2) from Homo sapiens (Human).